The primary structure comprises 316 residues: Coproporphyrin III ferrochelatase (316 aa).

Residues Tyr-13, Arg-30, 46–47 (RY), Ser-54, and Tyr-125 contribute to the Fe-coproporphyrin III site. Fe(2+) is bound by residues His-183 and Glu-264.

Belongs to the ferrochelatase family.

The protein localises to the cytoplasm. The catalysed reaction is Fe-coproporphyrin III + 2 H(+) = coproporphyrin III + Fe(2+). The protein operates within porphyrin-containing compound metabolism; protoheme biosynthesis. Involved in coproporphyrin-dependent heme b biosynthesis. Catalyzes the insertion of ferrous iron into coproporphyrin III to form Fe-coproporphyrin III. This chain is Coproporphyrin III ferrochelatase, found in Geobacillus thermodenitrificans (strain NG80-2).